A 276-amino-acid chain; its full sequence is Glutamate racemase (276 aa).

Substrate is bound by residues 10-11 and 42-43; these read DS and YG. The active-site Proton donor/acceptor is Cys74. 75–76 is a binding site for substrate; it reads NT. The Proton donor/acceptor role is filled by Cys185. Position 186 to 187 (186 to 187) interacts with substrate; that stretch reads TH.

This sequence belongs to the aspartate/glutamate racemases family.

It catalyses the reaction L-glutamate = D-glutamate. Its pathway is cell wall biogenesis; peptidoglycan biosynthesis. Its function is as follows. Provides the (R)-glutamate required for cell wall biosynthesis. This Levilactobacillus brevis (strain ATCC 367 / BCRC 12310 / CIP 105137 / JCM 1170 / LMG 11437 / NCIMB 947 / NCTC 947) (Lactobacillus brevis) protein is Glutamate racemase.